The sequence spans 487 residues: Betaine aldehyde dehydrogenase (487 aa).

Residues S26 and D93 each coordinate K(+). NAD(+) is bound at residue 150–152 (GAW). The active-site Charge relay system is K162. NAD(+) is bound by residues 176–179 (KPSE) and 229–232 (SVPT). L244 contributes to the K(+) binding site. Residue E250 is the Proton acceptor of the active site. Positions 252, 284, and 384 each coordinate NAD(+). C284 (nucleophile) is an active-site residue. Residue C284 is modified to Cysteine sulfenic acid (-SOH). K(+) is bound by residues K454 and G457. E461 acts as the Charge relay system in catalysis.

This sequence belongs to the aldehyde dehydrogenase family. As to quaternary structure, dimer of dimers. Requires K(+) as cofactor.

It catalyses the reaction betaine aldehyde + NAD(+) + H2O = glycine betaine + NADH + 2 H(+). Its pathway is amine and polyamine biosynthesis; betaine biosynthesis via choline pathway; betaine from betaine aldehyde: step 1/1. In terms of biological role, involved in the biosynthesis of the osmoprotectant glycine betaine. Catalyzes the irreversible oxidation of betaine aldehyde to the corresponding acid. The chain is Betaine aldehyde dehydrogenase from Rhizobium etli (strain ATCC 51251 / DSM 11541 / JCM 21823 / NBRC 15573 / CFN 42).